The following is a 338-amino-acid chain: 1-aminocyclopropane-1-carboxylate deaminase (338 aa).

K51 carries the post-translational modification N6-(pyridoxal phosphate)lysine. Catalysis depends on S78, which acts as the Nucleophile.

Belongs to the ACC deaminase/D-cysteine desulfhydrase family. Homotrimer. The cofactor is pyridoxal 5'-phosphate.

It carries out the reaction 1-aminocyclopropane-1-carboxylate + H2O = 2-oxobutanoate + NH4(+). Functionally, catalyzes a cyclopropane ring-opening reaction, the irreversible conversion of 1-aminocyclopropane-1-carboxylate (ACC) to ammonia and alpha-ketobutyrate. Allows growth on ACC as a nitrogen source. The protein is 1-aminocyclopropane-1-carboxylate deaminase of Pseudomonas fluorescens.